A 421-amino-acid polypeptide reads, in one-letter code: Forkhead box protein J1 (421 aa).

Disordered regions lie at residues 1-32 (MAES…LDDS) and 79-110 (PACL…PPPD). Over residues 11-21 (AGPGEEAGPEG) the composition is skewed to gly residues. Residues 90–99 (KPTSSCTSRS) show a composition bias toward polar residues. A DNA-binding region (fork-head) is located at residues 120 to 210 (VKPPYSYATL…YAERLLSGAF (91 aa)). The disordered stretch occupies residues 256–277 (EATGEGGWGTGEGRLGHKRKQP). Residues 259–268 (GEGGWGTGEG) show a composition bias toward gly residues.

This sequence belongs to the FOXJ1 family. Pulmonary epithelium, testis and oviduct.

The protein resides in the nucleus. Functionally, transcription factor specifically required for the formation of motile cilia. Acts by activating transcription of genes that mediate assembly of motile cilia, such as CFAP157. Binds the DNA consensus sequences 5'-HWDTGTTTGTTTA-3' or 5'-KTTTGTTGTTKTW-3' (where H is not G, W is A or T, D is not C, and K is G or T). Activates the transcription of a variety of ciliary proteins in the developing brain and lung. The protein is Forkhead box protein J1 (Foxj1) of Rattus norvegicus (Rat).